Reading from the N-terminus, the 279-residue chain is Sperm acrosome membrane-associated protein 1 (279 aa).

The N-terminal stretch at 1-29 (MKSRGAGCSARLLLTVGWLLLAGLQSTCG) is a signal peptide. Residues 30–221 (INVTAIQDPS…VIICIFVIFV (192 aa)) lie on the Extracellular side of the membrane. A glycan (N-linked (GlcNAc...) asparagine) is linked at Asn-31. Residues 39 to 74 (SLAREGEGEPEGDEEPENDSETEKEPQAEAEDDSEG) form a disordered region. Over residues 46–58 (GEPEGDEEPENDS) the composition is skewed to acidic residues. The helical transmembrane segment at 222–242 (LIFIIINWTAVKDFWAKASTT) threads the bilayer. Residues 243 to 279 (EIQSELSSMRYKDSTSLDQSPTDIPGHEDDALSEWNE) are Cytoplasmic-facing. Tyr-253 carries the post-translational modification Phosphotyrosine. Residues 253–279 (YKDSTSLDQSPTDIPGHEDDALSEWNE) form a disordered region. Phosphoserine occurs at positions 262 and 275.

Interacts with CYLC1; the interaction may be relevant for proper acrosome attachment to the nuclear envelope. In terms of processing, N-glycosylated.

The protein localises to the cytoplasmic vesicle. It is found in the secretory vesicle. Its subcellular location is the acrosome inner membrane. Its function is as follows. Plays a role in acrosome expansion and establishment of normal sperm morphology during spermatogenesis. Important for male fertility. The protein is Sperm acrosome membrane-associated protein 1 (SPACA1) of Bos taurus (Bovine).